Consider the following 175-residue polypeptide: Large ribosomal subunit protein uL6 (175 aa).

It belongs to the universal ribosomal protein uL6 family. Part of the 50S ribosomal subunit.

Functionally, this protein binds to the 23S rRNA, and is important in its secondary structure. It is located near the subunit interface in the base of the L7/L12 stalk, and near the tRNA binding site of the peptidyltransferase center. The chain is Large ribosomal subunit protein uL6 from Xylella fastidiosa (strain M12).